Consider the following 265-residue polypeptide: Mlc titration factor A (265 aa).

Zn(2+)-binding residues include histidine 111, histidine 148, histidine 152, and glutamate 211.

The protein belongs to the MtfA family. As to quaternary structure, interacts with Mlc. Zn(2+) is required as a cofactor.

It is found in the cytoplasm. Its function is as follows. Involved in the modulation of the activity of the glucose-phosphotransferase system (glucose-PTS). Interacts with the transcriptional repressor Mlc, preventing its interaction with DNA and leading to the modulation of expression of genes regulated by Mlc, including ptsG, which encodes the PTS system glucose-specific EIICB component. In terms of biological role, shows zinc-dependent metallopeptidase activity. In Pectobacterium atrosepticum (strain SCRI 1043 / ATCC BAA-672) (Erwinia carotovora subsp. atroseptica), this protein is Mlc titration factor A.